The chain runs to 276 residues: MKTPFERLALYDINASIKEGSYVAVIGHTGSGKSTLLQHLNGLLKPTKGQISLGSTVIQAGKKNKDLKKLRKKVGIVFQFPEHQLFEETVLKDISFGPMNFGVKKEDAEQKAREMLQLVGLSEELLDRSPFELSGGQMRRVAIAGVLAMDPEVLVLDEPTAGLDPRGRKEIMDMFYELHQRGNLTTILVTHSMEDAAAYADEMIVMHKGTIQASGSPRDLFLKGEEMAGWGLDLPETIKFQRHLEAALGVRFNEPMLTIEDAAAEIRALFQGEKTL.

In terms of domain architecture, ABC transporter spans 1–233 (MKTPFERLAL…GEEMAGWGLD (233 aa)). 27 to 34 (GHTGSGKS) contributes to the ATP binding site. Glu-158 acts as the Proton acceptor in catalysis.

Belongs to the ABC transporter superfamily. Energy-coupling factor EcfA family. As to quaternary structure, forms a stable energy-coupling factor (ECF) transporter complex composed of 2 membrane-embedded substrate-binding proteins (S component), 2 ATP-binding proteins (A component) and 2 transmembrane proteins (T component).

Its subcellular location is the cell membrane. Its function is as follows. ATP-binding (A) component of a common energy-coupling factor (ECF) ABC-transporter complex. Unlike classic ABC transporters this ECF transporter provides the energy necessary to transport a number of different substrates. The chain is Energy-coupling factor transporter ATP-binding protein EcfA2 from Bacillus subtilis (strain 168).